Reading from the N-terminus, the 191-residue chain is MIPFTNFESRLIKLPINNVDTDQIIPARFLKTTSKVGLDKQLFNDWRQDPDFVLNRPESQGLQILLAGDNFGCGSSREHAPWALTQWGFRAVISTSFADIFKQNSLKNSLLPIEVPADVHAELFSSDGPAKIDLPNQTLTTPSGREVHFEVDQFSKHCLVKGVDELGYILEQAPEIAAYEASHPAPINALA.

This sequence belongs to the LeuD family. LeuD type 1 subfamily. As to quaternary structure, heterodimer of LeuC and LeuD.

The enzyme catalyses (2R,3S)-3-isopropylmalate = (2S)-2-isopropylmalate. It participates in amino-acid biosynthesis; L-leucine biosynthesis; L-leucine from 3-methyl-2-oxobutanoate: step 2/4. Catalyzes the isomerization between 2-isopropylmalate and 3-isopropylmalate, via the formation of 2-isopropylmaleate. In Solibacter usitatus (strain Ellin6076), this protein is 3-isopropylmalate dehydratase small subunit.